A 335-amino-acid chain; its full sequence is MYSLIRKCLFSMDAETAHNFSIQALKLAGKLPINVLPMPLNPVEVMGLQFKNPIGLAAGADKNGEAIDGFGKLGFGFIEVGTVTPVAQDGNPKPRQFRILEAEGIINRNGFNNLGVDVLVENVKKAKYDGIIGINIGKNAVTPIERALDDYQICLRKVYEHADYITVNISSPNTKNLRTLQYGEALDDLLRSLKSEQESLSQKFNRYKPLVLKIAPDLTDEEIASVADSLVRYKIDGVIAGNTTLSRDPVVGLKNAEQQGGLSGKPLNTLSTRLISTLAKELNGALPIIGSGGIHSVASGQEKIDAGASLLQVYSAMIYQGPALIQNLAKHIQVR.

Residues 58-62 (AGADK) and Thr82 each bind FMN. Lys62 is a substrate binding site. 107–111 (NRNGF) is a substrate binding site. Asn135 and Asn168 together coordinate FMN. Substrate is bound at residue Asn168. Catalysis depends on Ser171, which acts as the Nucleophile. Asn173 contacts substrate. Residues Lys213 and Gly241 each coordinate FMN. Substrate is bound at residue 242-243 (NT). Residues Gly264, Gly293, and 314–315 (YS) each bind FMN.

Belongs to the dihydroorotate dehydrogenase family. Type 2 subfamily. As to quaternary structure, monomer. It depends on FMN as a cofactor.

It localises to the cell membrane. It catalyses the reaction (S)-dihydroorotate + a quinone = orotate + a quinol. It participates in pyrimidine metabolism; UMP biosynthesis via de novo pathway; orotate from (S)-dihydroorotate (quinone route): step 1/1. Its function is as follows. Catalyzes the conversion of dihydroorotate to orotate with quinone as electron acceptor. The chain is Dihydroorotate dehydrogenase (quinone) from Actinobacillus pleuropneumoniae serotype 5b (strain L20).